Here is a 356-residue protein sequence, read N- to C-terminus: Nitric oxide synthase oxygenase (356 aa).

C63 contacts heme.

It belongs to the NOS family. Bacterial NOS oxygenase subfamily. In terms of assembly, homodimer. Forms a complex with trpS2; one homodimer of trpS2 binds one homodimer of nos. It depends on heme as a cofactor. The cofactor is (6S)-5,6,7,8-tetrahydrofolate.

The catalysed reaction is 3 reduced [flavodoxin] + 2 L-arginine + 4 O2 = 3 oxidized [flavodoxin] + 2 L-citrulline + 2 nitric oxide + 4 H2O + 5 H(+). With respect to regulation, nitric oxide synthase activity is increased by trpS2. Functionally, catalyzes the production of nitric oxide. The complex between TrpRS II and nitric oxide synthase oxygenase catalyzes the regioselective nitration of tryptophan at the 4-position. The polypeptide is Nitric oxide synthase oxygenase (nos) (Deinococcus radiodurans (strain ATCC 13939 / DSM 20539 / JCM 16871 / CCUG 27074 / LMG 4051 / NBRC 15346 / NCIMB 9279 / VKM B-1422 / R1)).